The primary structure comprises 1002 residues: Isoleucine--tRNA ligase (1002 aa).

The 'HIGH' region motif lies at 70 to 80; that stretch reads PYANGNIHIGH. An L-isoleucyl-5'-AMP-binding site is contributed by Glu-630. The 'KMSKS' region motif lies at 671–675; that stretch reads KMSKS. Lys-674 is a binding site for ATP.

Belongs to the class-I aminoacyl-tRNA synthetase family. IleS type 1 subfamily. As to quaternary structure, monomer.

The protein localises to the cytoplasm. It catalyses the reaction tRNA(Ile) + L-isoleucine + ATP = L-isoleucyl-tRNA(Ile) + AMP + diphosphate. In terms of biological role, catalyzes the attachment of isoleucine to tRNA(Ile). As IleRS can inadvertently accommodate and process structurally similar amino acids such as valine, to avoid such errors it has two additional distinct tRNA(Ile)-dependent editing activities. One activity is designated as 'pretransfer' editing and involves the hydrolysis of activated Val-AMP. The other activity is designated 'posttransfer' editing and involves deacylation of mischarged Val-tRNA(Ile). The chain is Isoleucine--tRNA ligase from Bradyrhizobium diazoefficiens (strain JCM 10833 / BCRC 13528 / IAM 13628 / NBRC 14792 / USDA 110).